The following is a 164-amino-acid chain: MARTKHPAVRKSKAEPKKKLQFERSPRPSKAQRAGGGTGTSATTRSAAGTSASGTPRQQTKQRKPHRFRPGTVALREIRKFQKTTELLIPFAPFSRLVREITDFYSKDVSRWTLEALLALQEAAEYHLVDIFEVSNLCAIHAKRVTIMQKDMQLARRIGGRRPW.

Residues 1–11 show a composition bias toward basic residues; sequence MARTKHPAVRK. Residues 1–71 are disordered; sequence MARTKHPAVR…QRKPHRFRPG (71 aa). Lysine 5 carries the N6,N6,N6-trimethyllysine; alternate modification. N6,N6-dimethyllysine; alternate is present on lysine 5. 3 positions are modified to N6-methyllysine; alternate: lysine 5, lysine 19, and lysine 30. Residues 12–26 show a composition bias toward basic and acidic residues; it reads SKAEPKKKLQFERSP. Lysine 19 is subject to N6-acetyllysine; alternate. Residue lysine 30 is modified to N6,N6,N6-trimethyllysine; alternate. Position 30 is an N6,N6-dimethyllysine; alternate (lysine 30). Residues 40 to 55 are compositionally biased toward low complexity; that stretch reads TSATTRSAAGTSASGT. Basic residues predominate over residues 60–69; that stretch reads TKQRKPHRFR.

It belongs to the histone H3 family.

The protein resides in the chromosome. It localises to the centromere. Its subcellular location is the kinetochore. Histone H3-like variant which exclusively replaces conventional H3 in the nucleosome core of centromeric chromatin at the inner plate of the kinetochore. Required for recruitment and assembly of kinetochore proteins, mitotic progression and chromosome segregation. This is Histone H3-like centromeric protein CENH3 from Oryza sativa subsp. japonica (Rice).